A 490-amino-acid polypeptide reads, in one-letter code: Adenylyltransferase and sulfurtransferase uba4 (490 aa).

The tract at residues 33-54 (EAAKTPPYSDSTETDRGSSSST) is disordered. ATP is bound by residues G96, D117, 124–128 (SNLHR), K141, and 185–186 (DH). C234 and C237 together coordinate Zn(2+). Residue C251 is the Glycyl thioester intermediate; for adenylyltransferase activity of the active site. Residues C323 and C326 each coordinate Zn(2+). The Rhodanese domain occupies 379 to 488 (EHGKPVLLDV…WKREVDSTLP (110 aa)). The active-site Cysteine persulfide intermediate; for sulfurtransferase activity is the C443.

It in the N-terminal section; belongs to the HesA/MoeB/ThiF family. UBA4 subfamily. Zn(2+) is required as a cofactor.

Its subcellular location is the cytoplasm. The protein resides in the cytosol. The catalysed reaction is [molybdopterin-synthase sulfur-carrier protein]-C-terminal Gly-Gly + ATP + H(+) = [molybdopterin-synthase sulfur-carrier protein]-C-terminal Gly-Gly-AMP + diphosphate. It catalyses the reaction [molybdopterin-synthase sulfur-carrier protein]-C-terminal Gly-Gly-AMP + S-sulfanyl-L-cysteinyl-[cysteine desulfurase] + AH2 = [molybdopterin-synthase sulfur-carrier protein]-C-terminal-Gly-aminoethanethioate + L-cysteinyl-[cysteine desulfurase] + A + AMP + 2 H(+). It participates in tRNA modification; 5-methoxycarbonylmethyl-2-thiouridine-tRNA biosynthesis. Plays a central role in 2-thiolation of mcm(5)S(2)U at tRNA wobble positions of cytosolic tRNA(Lys), tRNA(Glu) and tRNA(Gln). Also essential during biosynthesis of the molybdenum cofactor. Acts by mediating the C-terminal thiocarboxylation of sulfur carriers URM1 and MOCS2A. Its N-terminus first activates urm1 and MOCS2A as acyl-adenylates (-COAMP), then the persulfide sulfur on the catalytic cysteine is transferred to URM1 and MOCS2A to form thiocarboxylation (-COSH) of their C-terminus. The reaction probably involves hydrogen sulfide that is generated from the persulfide intermediate and that acts as a nucleophile towards URM1 and MOCS2A. Subsequently, a transient disulfide bond is formed. Does not use thiosulfate as sulfur donor; NFS1 probably acting as a sulfur donor for thiocarboxylation reactions. The protein is Adenylyltransferase and sulfurtransferase uba4 of Pyricularia oryzae (strain 70-15 / ATCC MYA-4617 / FGSC 8958) (Rice blast fungus).